The following is a 699-amino-acid chain: Elongation factor G 1 (699 aa).

Residues 8 to 290 (EHYRNIGICA…AVIEFLPSPS (283 aa)) enclose the tr-type G domain. GTP-binding positions include 17 to 24 (AHVDAGKT), 88 to 92 (DTPGH), and 142 to 145 (NKMD).

It belongs to the TRAFAC class translation factor GTPase superfamily. Classic translation factor GTPase family. EF-G/EF-2 subfamily.

It localises to the cytoplasm. Functionally, catalyzes the GTP-dependent ribosomal translocation step during translation elongation. During this step, the ribosome changes from the pre-translocational (PRE) to the post-translocational (POST) state as the newly formed A-site-bound peptidyl-tRNA and P-site-bound deacylated tRNA move to the P and E sites, respectively. Catalyzes the coordinated movement of the two tRNA molecules, the mRNA and conformational changes in the ribosome. This is Elongation factor G 1 from Vibrio parahaemolyticus serotype O3:K6 (strain RIMD 2210633).